We begin with the raw amino-acid sequence, 358 residues long: sn-glycerol-3-phosphate import ATP-binding protein UgpC (358 aa).

The ABC transporter domain occupies 4–235; sequence VELKQVRKTY…PATLFVASFI (232 aa). 37-44 lines the ATP pocket; sequence GPSGCGKS.

This sequence belongs to the ABC transporter superfamily. sn-glycerol-3-phosphate importer (TC 3.A.1.1.3) family. In terms of assembly, the complex is composed of two ATP-binding proteins (UgpC), two transmembrane proteins (UgpA and UgpE) and a solute-binding protein (UgpB).

The protein localises to the cell inner membrane. The catalysed reaction is sn-glycerol 3-phosphate(out) + ATP + H2O = sn-glycerol 3-phosphate(in) + ADP + phosphate + H(+). Part of the ABC transporter complex UgpBAEC involved in sn-glycerol-3-phosphate (G3P) import. Responsible for energy coupling to the transport system. This chain is sn-glycerol-3-phosphate import ATP-binding protein UgpC, found in Roseobacter denitrificans (strain ATCC 33942 / OCh 114) (Erythrobacter sp. (strain OCh 114)).